Here is a 61-residue protein sequence, read N- to C-terminus: Photosystem II reaction center protein Z (61 aa).

The next 2 membrane-spanning stretches (helical) occupy residues leucine 5 to alanine 25 and asparagine 38 to serine 58.

Belongs to the PsbZ family. PSII is composed of 1 copy each of membrane proteins PsbA, PsbB, PsbC, PsbD, PsbE, PsbF, PsbH, PsbI, PsbJ, PsbK, PsbL, PsbM, PsbT, PsbX, PsbY, PsbZ, Psb30/Ycf12, at least 3 peripheral proteins of the oxygen-evolving complex and a large number of cofactors. It forms dimeric complexes.

It is found in the plastid. Its subcellular location is the chloroplast thylakoid membrane. May control the interaction of photosystem II (PSII) cores with the light-harvesting antenna, regulates electron flow through the 2 photosystem reaction centers. PSII is a light-driven water plastoquinone oxidoreductase, using light energy to abstract electrons from H(2)O, generating a proton gradient subsequently used for ATP formation. This chain is Photosystem II reaction center protein Z, found in Skeletonema costatum (Marine centric diatom).